We begin with the raw amino-acid sequence, 102 residues long: Monothiol glutaredoxin-S10 (102 aa).

The region spanning 1–101 (MDVVARLASQ…ILLKEAGALW (101 aa)) is the Glutaredoxin domain. Cysteine 21 contacts [2Fe-2S] cluster. Residues 99–102 (ALWL) carry the Responsive for interaction with TGA factors motif.

This sequence belongs to the glutaredoxin family. CC-type subfamily.

The protein resides in the cytoplasm. Its subcellular location is the nucleus. Its function is as follows. May only reduce GSH-thiol disulfides, but not protein disulfides. This chain is Monothiol glutaredoxin-S10 (GRXS10), found in Arabidopsis thaliana (Mouse-ear cress).